The primary structure comprises 282 residues: Tyrosine recombinase XerA (282 aa).

The 78-residue stretch at Glu2–Gly79 folds into the Core-binding (CB) domain. The Tyr recombinase domain occupies Ser95–Glu271. Residues Arg132, Lys157, His223, Arg226, and His249 contribute to the active site. The active-site O-(3'-phospho-DNA)-tyrosine intermediate is the Tyr258.

Belongs to the 'phage' integrase family. XerA subfamily.

Its subcellular location is the cytoplasm. Functionally, site-specific tyrosine recombinase, which acts by catalyzing the cutting and rejoining of the recombining DNA molecules. This Thermococcus onnurineus (strain NA1) protein is Tyrosine recombinase XerA.